The chain runs to 309 residues: NAD kinase (309 aa).

Asp-89 serves as the catalytic Proton acceptor. Residues 89 to 90 (DG), 163 to 164 (NE), Arg-191, Asp-193, and 204 to 209 (TAYSLS) contribute to the NAD(+) site.

It belongs to the NAD kinase family. It depends on a divalent metal cation as a cofactor.

It is found in the cytoplasm. It carries out the reaction NAD(+) + ATP = ADP + NADP(+) + H(+). In terms of biological role, involved in the regulation of the intracellular balance of NAD and NADP, and is a key enzyme in the biosynthesis of NADP. Catalyzes specifically the phosphorylation on 2'-hydroxyl of the adenosine moiety of NAD to yield NADP. The chain is NAD kinase from Shewanella halifaxensis (strain HAW-EB4).